A 100-amino-acid chain; its full sequence is MASGKPKKKNPRLASGRKRVRQDVKINAANTSLRSKYRTAVKNVEKAVVAGDKAKATELFAKMQAVVDTVADKGIFHKNKAARDKSRLSTKVKALAAIAA.

Positions 1–20 (MASGKPKKKNPRLASGRKRV) are enriched in basic residues. Residues 1–21 (MASGKPKKKNPRLASGRKRVR) are disordered.

This sequence belongs to the bacterial ribosomal protein bS20 family.

Its function is as follows. Binds directly to 16S ribosomal RNA. The chain is Small ribosomal subunit protein bS20 from Albidiferax ferrireducens (strain ATCC BAA-621 / DSM 15236 / T118) (Rhodoferax ferrireducens).